The following is a 428-amino-acid chain: Isocitrate lyase 1 (428 aa).

91–93 (SGW) is a substrate binding site. Aspartate 153 lines the Mg(2+) pocket. Cysteine 191 serves as the catalytic Proton acceptor. Substrate-binding positions include 192 to 193 (GH), arginine 228, 313 to 317 (NCSPS), and threonine 347.

The protein belongs to the isocitrate lyase/PEP mutase superfamily. Isocitrate lyase family. In terms of assembly, homotetramer. It depends on Mg(2+) as a cofactor.

The catalysed reaction is D-threo-isocitrate = glyoxylate + succinate. It carries out the reaction (2S,3R)-3-hydroxybutane-1,2,3-tricarboxylate = pyruvate + succinate. The protein operates within carbohydrate metabolism; glyoxylate cycle; (S)-malate from isocitrate: step 1/2. Involved in the persistence and virulence of M.tuberculosis. Catalyzes the reversible formation of succinate and glyoxylate from isocitrate, a key step of the glyoxylate cycle, which operates as an anaplerotic route for replenishing the tricarboxylic acid cycle during growth on fatty acid substrates. It also catalyzes the formation of pyruvate and succinate from 2-methylisocitrate, a key step in the methylcitrate cycle (propionate degradation route). The sequence is that of Isocitrate lyase 1 (icl1) from Mycobacterium tuberculosis (strain ATCC 35801 / TMC 107 / Erdman).